Consider the following 38-residue polypeptide: MATPNPNKQPVELNRASLFIGLLLVLVLALLFSSYFFN.

A helical transmembrane segment spans residues 17 to 37; that stretch reads SLFIGLLLVLVLALLFSSYFF.

It belongs to the PsbL family. PSII is composed of 1 copy each of membrane proteins PsbA, PsbB, PsbC, PsbD, PsbE, PsbF, PsbH, PsbI, PsbJ, PsbK, PsbL, PsbM, PsbT, PsbX, PsbY, PsbZ, Psb30/Ycf12, peripheral proteins PsbO, CyanoQ (PsbQ), PsbU, PsbV and a large number of cofactors. It forms dimeric complexes.

The protein resides in the cellular thylakoid membrane. One of the components of the core complex of photosystem II (PSII). PSII is a light-driven water:plastoquinone oxidoreductase that uses light energy to abstract electrons from H(2)O, generating O(2) and a proton gradient subsequently used for ATP formation. It consists of a core antenna complex that captures photons, and an electron transfer chain that converts photonic excitation into a charge separation. This subunit is found at the monomer-monomer interface and is required for correct PSII assembly and/or dimerization. In Acaryochloris marina (strain MBIC 11017), this protein is Photosystem II reaction center protein L.